A 671-amino-acid chain; its full sequence is Peroxisomal membrane protein PEX17 (671 aa).

The next 8 membrane-spanning stretches (helical) occupy residues 127 to 147 (LPLLAGLILADYDISADGPTL), 187 to 207 (VPVLACISIAQVYSLLGDVAI), 212 to 232 (FLQVGLDLIFSNYGLEMGTAL), 258 to 278 (VVALLNTFAHIASSCIVHVDI), 318 to 338 (YLKWELFTLCIIMQGIANMLL), 372 to 392 (FAAYDYVFFSAIDVLLSEYAP), 475 to 495 (LVEAAHSVILAGLAVPTNAVV), and 504 to 524 (MGGVLPLFPGVFSWNQFVLAI).

The protein resides in the peroxisome membrane. Functionally, involved in peroxisome biosynthesis. Required for the import of a subset of matrix proteins into peroxisomes. The sequence is that of Peroxisomal membrane protein PEX17 (PEX17) from Yarrowia lipolytica (strain CLIB 122 / E 150) (Yeast).